The primary structure comprises 229 residues: Small ribosomal subunit protein uS3 (229 aa).

A KH type-2 domain is found at 39-107; sequence VRQFLIKELK…PAQINISEVR (69 aa).

Belongs to the universal ribosomal protein uS3 family. Part of the 30S ribosomal subunit. Forms a tight complex with proteins S10 and S14.

Functionally, binds the lower part of the 30S subunit head. Binds mRNA in the 70S ribosome, positioning it for translation. The polypeptide is Small ribosomal subunit protein uS3 (Photobacterium profundum (strain SS9)).